Consider the following 260-residue polypeptide: Proliferating cell nuclear antigen (260 aa).

A DNA-binding region spans residues 61-80 (RCDRNISMGMNLGSMSKILI).

It belongs to the PCNA family. In terms of assembly, homotrimer. Forms a complex with activator 1 heteropentamer in the presence of ATP.

Its subcellular location is the nucleus. This protein is an auxiliary protein of DNA polymerase delta and is involved in the control of eukaryotic DNA replication by increasing the polymerase's processibility during elongation of the leading strand. This Bombyx mori (Silk moth) protein is Proliferating cell nuclear antigen (PCNA).